We begin with the raw amino-acid sequence, 405 residues long: Acetylornithine/succinyldiaminopimelate aminotransferase (405 aa).

Residues 108 to 109 (GT) and Phe141 contribute to the pyridoxal 5'-phosphate site. Arg144 provides a ligand contact to N(2)-acetyl-L-ornithine. Residue 226 to 229 (DEVQ) participates in pyridoxal 5'-phosphate binding. At Lys255 the chain carries N6-(pyridoxal phosphate)lysine. Ser283 contacts N(2)-acetyl-L-ornithine. Thr284 serves as a coordination point for pyridoxal 5'-phosphate.

Belongs to the class-III pyridoxal-phosphate-dependent aminotransferase family. ArgD subfamily. As to quaternary structure, homodimer. Requires pyridoxal 5'-phosphate as cofactor.

Its subcellular location is the cytoplasm. The catalysed reaction is N(2)-acetyl-L-ornithine + 2-oxoglutarate = N-acetyl-L-glutamate 5-semialdehyde + L-glutamate. It catalyses the reaction N-succinyl-(2S,6S)-2,6-diaminopimelate + 2-oxoglutarate = (S)-2-succinylamino-6-oxoheptanedioate + L-glutamate. It participates in amino-acid biosynthesis; L-arginine biosynthesis; N(2)-acetyl-L-ornithine from L-glutamate: step 4/4. The protein operates within amino-acid biosynthesis; L-lysine biosynthesis via DAP pathway; LL-2,6-diaminopimelate from (S)-tetrahydrodipicolinate (succinylase route): step 2/3. Inhibited by gabaculine (Gcn). Involved in both the arginine and lysine biosynthetic pathways. The chain is Acetylornithine/succinyldiaminopimelate aminotransferase from Salmonella typhimurium (strain LT2 / SGSC1412 / ATCC 700720).